Consider the following 289-residue polypeptide: Oxaloacetate decarboxylase (289 aa).

Ser50 contacts substrate. Mg(2+) is bound at residue Asp88. Substrate is bound by residues Arg159 and His235.

Belongs to the isocitrate lyase/PEP mutase superfamily. Oxaloacetate decarboxylase family. Homotetramer; dimer of dimers. Mg(2+) is required as a cofactor.

The enzyme catalyses oxaloacetate + H(+) = pyruvate + CO2. In terms of biological role, catalyzes the decarboxylation of oxaloacetate into pyruvate. Seems to play a role in maintaining cellular concentrations of bicarbonate and pyruvate. The chain is Oxaloacetate decarboxylase from Pseudomonas syringae pv. tomato (strain ATCC BAA-871 / DC3000).